An 84-amino-acid chain; its full sequence is uncharacterized protein (84 aa).

This is an uncharacterized protein from Dictyostelium discoideum (Social amoeba).